Consider the following 671-residue polypeptide: DNA ligase (671 aa).

NAD(+)-binding positions include 32–36 (DAEYD), 81–82 (SL), and E113. The active-site N6-AMP-lysine intermediate is K115. Residues R136, E173, K290, and K314 each coordinate NAD(+). Positions 408, 411, 426, and 432 each coordinate Zn(2+). Residues 593–671 (EIDSPFAGKT…EAEMLRLLGV (79 aa)) enclose the BRCT domain.

Belongs to the NAD-dependent DNA ligase family. LigA subfamily. It depends on Mg(2+) as a cofactor. Mn(2+) is required as a cofactor.

The enzyme catalyses NAD(+) + (deoxyribonucleotide)n-3'-hydroxyl + 5'-phospho-(deoxyribonucleotide)m = (deoxyribonucleotide)n+m + AMP + beta-nicotinamide D-nucleotide.. Its function is as follows. DNA ligase that catalyzes the formation of phosphodiester linkages between 5'-phosphoryl and 3'-hydroxyl groups in double-stranded DNA using NAD as a coenzyme and as the energy source for the reaction. It is essential for DNA replication and repair of damaged DNA. The polypeptide is DNA ligase (Salmonella arizonae (strain ATCC BAA-731 / CDC346-86 / RSK2980)).